Consider the following 457-residue polypeptide: Mesentericin Y105 secretion protein MesE (457 aa).

The chain crosses the membrane as a helical span at residues 22–42 (TLIIVPIFLLVVFIVLFSLFA).

Belongs to the membrane fusion protein (MFP) (TC 8.A.1) family.

It localises to the membrane. Its function is as follows. Involved in the secretion of mesentericin Y105. The sequence is that of Mesentericin Y105 secretion protein MesE (mesE) from Leuconostoc mesenteroides.